Here is a 200-residue protein sequence, read N- to C-terminus: Small ribosomal subunit protein uS4 (200 aa).

The 64-residue stretch at 92-155 (SRLDNLVYRM…RNLTVVKEAL (64 aa)) folds into the S4 RNA-binding domain.

Belongs to the universal ribosomal protein uS4 family. As to quaternary structure, part of the 30S ribosomal subunit. Contacts protein S5. The interaction surface between S4 and S5 is involved in control of translational fidelity.

One of the primary rRNA binding proteins, it binds directly to 16S rRNA where it nucleates assembly of the body of the 30S subunit. Its function is as follows. With S5 and S12 plays an important role in translational accuracy. The sequence is that of Small ribosomal subunit protein uS4 from Shouchella clausii (strain KSM-K16) (Alkalihalobacillus clausii).